A 486-amino-acid chain; its full sequence is MQILSVTAEIFPLVKTGGLADVAGSLPKALRAHGIHTRSFVPGYPGVMRALSDATPVAEFESLFGERATLIAARAHGLDLFVLDAPAFYDRQGALYVDRHGRDYADNWKRFAAFSLVASQIARGLVPNWRPHIIHAHDWHAAMSLLYLKYAGDDTIPRVLTVHNLAFQGQFPAHYFPELGLPAEAYSIDGVEYYGDIGFLKGGLQAADAITVVSPTYAREIMSPAFGMGLEGVMNERHADVVGIVNGIDLEVWDPSSDPCIEHHYSARVPLRRLPNRQVLLRHFGLPDTCGPIFASVNRLTWQKGMDLLAATAGEIVKNGGTLIIHGQGEEKLEAAFMDLMRRFPQNISVSIGYDEHLAHRIHAGADAMLVPSRFEPCGLTQLYALRYGCVPVVARTGGLSETIIDANDAALHAHVATGIQFAPIDEDGLRHALRRTFRLYRLRRVWEGLRRQGMKTDCSWHRSAARYADLYSELLNPDMRLVGSA.

ADP-alpha-D-glucose is bound at residue lysine 15.

It belongs to the glycosyltransferase 1 family. Bacterial/plant glycogen synthase subfamily.

The enzyme catalyses [(1-&gt;4)-alpha-D-glucosyl](n) + ADP-alpha-D-glucose = [(1-&gt;4)-alpha-D-glucosyl](n+1) + ADP + H(+). It functions in the pathway glycan biosynthesis; glycogen biosynthesis. Functionally, synthesizes alpha-1,4-glucan chains using ADP-glucose. This Rhizobium meliloti (strain 1021) (Ensifer meliloti) protein is Glycogen synthase 2 (glgA2).